Reading from the N-terminus, the 293-residue chain is uncharacterized protein (293 aa).

This is an uncharacterized protein from Treponema pallidum (strain Nichols).